Consider the following 54-residue polypeptide: uncharacterized protein (54 aa).

2 stretches are compositionally biased toward basic and acidic residues: residues 1–19 (MTEK…HNDL) and 26–54 (EELK…YDTK). Positions 1–54 (MTEKKQQNKPNENPEHNDLTDPIPNEELKENMNDEKHKRQQRDNSQSERDYDTK) are disordered.

This is an uncharacterized protein from Bacillus subtilis (strain 168).